A 292-amino-acid chain; its full sequence is 4-hydroxy-tetrahydrodipicolinate synthase (292 aa).

T45 serves as a coordination point for pyruvate. Y133 acts as the Proton donor/acceptor in catalysis. The Schiff-base intermediate with substrate role is filled by K161. Pyruvate is bound at residue I203.

The protein belongs to the DapA family. In terms of assembly, homotetramer; dimer of dimers.

It is found in the cytoplasm. The catalysed reaction is L-aspartate 4-semialdehyde + pyruvate = (2S,4S)-4-hydroxy-2,3,4,5-tetrahydrodipicolinate + H2O + H(+). It functions in the pathway amino-acid biosynthesis; L-lysine biosynthesis via DAP pathway; (S)-tetrahydrodipicolinate from L-aspartate: step 3/4. Functionally, catalyzes the condensation of (S)-aspartate-beta-semialdehyde [(S)-ASA] and pyruvate to 4-hydroxy-tetrahydrodipicolinate (HTPA). The chain is 4-hydroxy-tetrahydrodipicolinate synthase from Salmonella typhi.